Reading from the N-terminus, the 229-residue chain is Non-structural protein P8 (229 aa).

Positions 14–26 are CCM-I; sequence MKHNQDRVEELSL. Positions 94–116 are CCM-III; that stretch reads IKRHVNEQILPKLKSDLSELKKK. The next 2 helical transmembrane spans lie at 119 to 139 and 162 to 182; these read IIHTTLLVAAVVALLTSVCTL and SLNPMLGVVNLGATFLMMVCA. The interval 185-198 is CCM-II; sequence ERALNQQIDMIKKE.

This sequence belongs to the orbivirus NS3 family. As to quaternary structure, forms homooligomers via coiled-coil motif. Interacts with host OPTN; this interaction inhibits innate immune response.

It is found in the host cell membrane. The protein resides in the host Golgi apparatus. Plays a role in the inhibition of host innate immune response. Interacts with host OPTN and thus inhibits the recruitment of TBK1 to the host Golgi apparatus. In turn, downstream partner IRF3 cannot be activated and IFN-beta production is impaired. Its function is as follows. Facilitates viral particle release either by increasing plasma membrane permeability through a viroporin-like activity or by viral budding. The chain is Non-structural protein P8 (Segment-10) from Bluetongue virus 10 (isolate USA) (BTV 10).